The following is a 147-amino-acid chain: Transcriptional regulator MraZ (147 aa).

2 consecutive SpoVT-AbrB domains span residues 5–47 (QQLR…SEKE) and 76–123 (TFEI…SKSK).

This sequence belongs to the MraZ family. In terms of assembly, forms oligomers.

It localises to the cytoplasm. The protein resides in the nucleoid. The protein is Transcriptional regulator MraZ of Mycoplasmopsis synoviae (strain 53) (Mycoplasma synoviae).